The sequence spans 480 residues: Adenosylhomocysteinase (480 aa).

Substrate is bound by residues Thr-63, Asp-142, and Glu-203. An NAD(+)-binding site is contributed by 204–206 (TTT). Residues Lys-233 and Asp-237 each coordinate substrate. NAD(+) is bound by residues Asn-238, 267-272 (GYGDVG), Glu-290, Asn-325, 346-348 (IGH), and Asn-394.

The protein belongs to the adenosylhomocysteinase family. Requires NAD(+) as cofactor.

It is found in the cytoplasm. It carries out the reaction S-adenosyl-L-homocysteine + H2O = L-homocysteine + adenosine. It participates in amino-acid biosynthesis; L-homocysteine biosynthesis; L-homocysteine from S-adenosyl-L-homocysteine: step 1/1. May play a key role in the regulation of the intracellular concentration of adenosylhomocysteine. The sequence is that of Adenosylhomocysteinase from Xylella fastidiosa (strain Temecula1 / ATCC 700964).